The sequence spans 346 residues: Phenylalanine--tRNA ligase alpha subunit (346 aa).

Glutamate 261 provides a ligand contact to Mg(2+).

The protein belongs to the class-II aminoacyl-tRNA synthetase family. Phe-tRNA synthetase alpha subunit type 1 subfamily. In terms of assembly, tetramer of two alpha and two beta subunits. The cofactor is Mg(2+).

It is found in the cytoplasm. It catalyses the reaction tRNA(Phe) + L-phenylalanine + ATP = L-phenylalanyl-tRNA(Phe) + AMP + diphosphate + H(+). This is Phenylalanine--tRNA ligase alpha subunit from Streptococcus agalactiae serotype Ia (strain ATCC 27591 / A909 / CDC SS700).